We begin with the raw amino-acid sequence, 694 residues long: Elongation factor G (694 aa).

The region spanning 8–287 (EDYRNFGIMA…AVVEFLPAPT (280 aa)) is the tr-type G domain. Residues 17–24 (AHIDAGKT), 86–90 (DTPGH), and 140–143 (NKMD) contribute to the GTP site.

It belongs to the TRAFAC class translation factor GTPase superfamily. Classic translation factor GTPase family. EF-G/EF-2 subfamily.

It is found in the cytoplasm. Catalyzes the GTP-dependent ribosomal translocation step during translation elongation. During this step, the ribosome changes from the pre-translocational (PRE) to the post-translocational (POST) state as the newly formed A-site-bound peptidyl-tRNA and P-site-bound deacylated tRNA move to the P and E sites, respectively. Catalyzes the coordinated movement of the two tRNA molecules, the mRNA and conformational changes in the ribosome. This Brucella suis (strain ATCC 23445 / NCTC 10510) protein is Elongation factor G.